Consider the following 65-residue polypeptide: Gallinacin-12 (65 aa).

The first 19 residues, 1 to 19, serve as a signal peptide directing secretion; the sequence is MRNLCFVFIFISLLAHGST. 3 cysteine pairs are disulfide-bonded: Cys25–Cys54, Cys32–Cys47, and Cys37–Cys55.

It belongs to the beta-defensin family. As to expression, expressed in the large intestine, kidney liver, gall bladder, testis, ovary and male and female reproductive tracts. Expressed in the ovarian stroma and the theca and granulosa layers of the ovarian follicle.

Its subcellular location is the secreted. It localises to the cytoplasmic granule. Its function is as follows. Has bactericidal activity. This Gallus gallus (Chicken) protein is Gallinacin-12 (GAL12).